Here is a 548-residue protein sequence, read N- to C-terminus: Chaperonin GroEL (548 aa).

ATP contacts are provided by residues 30-33 (TLGP), Lys-51, 87-91 (DGTTT), Gly-415, 479-481 (NAA), and Asp-495.

It belongs to the chaperonin (HSP60) family. As to quaternary structure, forms a cylinder of 14 subunits composed of two heptameric rings stacked back-to-back. Interacts with the co-chaperonin GroES.

It is found in the cytoplasm. It carries out the reaction ATP + H2O + a folded polypeptide = ADP + phosphate + an unfolded polypeptide.. Together with its co-chaperonin GroES, plays an essential role in assisting protein folding. The GroEL-GroES system forms a nano-cage that allows encapsulation of the non-native substrate proteins and provides a physical environment optimized to promote and accelerate protein folding. This is Chaperonin GroEL from Salmonella arizonae (strain ATCC BAA-731 / CDC346-86 / RSK2980).